The following is a 430-amino-acid chain: Transcobalamin-2 (430 aa).

The N-terminal stretch at 1 to 18 (MELLKALLLLSGVFGALA) is a signal peptide. 3 cysteine pairs are disulfide-bonded: C21/C270, C116/C312, and C165/C208. Residues 152–156 (TNYYQ), H193, 193–197 (HVSVD), N245, S248, Q294, and 398–400 (WQL) each bind cob(II)alamin.

This sequence belongs to the eukaryotic cobalamin transport proteins family. In terms of assembly, interacts with CD320 (via LDL-receptor class A domains).

The protein localises to the secreted. Functionally, primary vitamin B12-binding and transport protein. Delivers cobalamin to cells. The polypeptide is Transcobalamin-2 (Tcn2) (Mus musculus (Mouse)).